Here is a 101-residue protein sequence, read N- to C-terminus: uncharacterized protein (101 aa).

Residues 39–74 are disordered; that stretch reads CDERHGRPLPHSQESQHGSATSKKAVRGTADTAPLE. The span at 50-60 shows a compositional bias: polar residues; that stretch reads SQESQHGSATS.

This is an uncharacterized protein from Homo sapiens (Human).